The primary structure comprises 95 residues: Protein E7 (95 aa).

Residues Met-1 to Glu-40 are E7 terminal domain. Positions Leu-24–Glu-28 match the LXCXE motif; interaction with host RB1 and TMEM173/STING motif. The segment at Cys-52 to Cys-88 is a zinc-finger region. A Nuclear export signal motif is present at residues Ile-70–Leu-78.

It belongs to the papillomaviridae E7 protein family. In terms of assembly, homodimer. Homooligomer. Interacts with host RB1; this interaction induces dissociation of RB1-E2F1 complex thereby disrupting RB1 activity. Interacts with host EP300; this interaction represses EP300 transcriptional activity. Interacts with protein E2; this interaction inhibits E7 oncogenic activity. Interacts with host TMEM173/STING; this interaction impairs the ability of TMEM173/STING to sense cytosolic DNA and promote the production of type I interferon (IFN-alpha and IFN-beta). Post-translationally, highly phosphorylated.

It localises to the host cytoplasm. It is found in the host nucleus. Functionally, plays a role in viral genome replication by driving entry of quiescent cells into the cell cycle. Stimulation of progression from G1 to S phase allows the virus to efficiently use the cellular DNA replicating machinery to achieve viral genome replication. E7 protein has both transforming and trans-activating activities. Induces the disassembly of the E2F1 transcription factor from RB1, with subsequent transcriptional activation of E2F1-regulated S-phase genes. Interferes with host histone deacetylation mediated by HDAC1 and HDAC2, leading to transcription activation. Also plays a role in the inhibition of both antiviral and antiproliferative functions of host interferon alpha. Interaction with host TMEM173/STING impairs the ability of TMEM173/STING to sense cytosolic DNA and promote the production of type I interferon (IFN-alpha and IFN-beta). The chain is Protein E7 from Human papillomavirus 17.